The chain runs to 115 residues: Large ribosomal subunit protein bL21 (115 aa).

This sequence belongs to the bacterial ribosomal protein bL21 family. Part of the 50S ribosomal subunit. Contacts protein L20.

Functionally, this protein binds to 23S rRNA in the presence of protein L20. This chain is Large ribosomal subunit protein bL21, found in Picosynechococcus sp. (strain ATCC 27264 / PCC 7002 / PR-6) (Agmenellum quadruplicatum).